Here is a 953-residue protein sequence, read N- to C-terminus: MDYKKSLNLPDTPFPMRGDLAKREPGWVAEWEETQVYQAIRAASRGRPRFVLHDGPPYANGDIHIGHAVNKILKDIIVKSRNMAGYDAHYVPGWDCHGMPIEIQIEKKYGKHLPVTEVQSKARAYALEQIDRQRKDFKRLGVLGDWHNPYLTMNFSNEADEIRVLGRILEKGYVFRGLKPVNWCFDCGSALAEAEVEYADRVDPAIDVAFPFTDRGALARAFGLDEVDAGAIVIWTTTPWTIPSNQALNVHPEIDYALVRVTPTPVHGPLLLLAQERVEPSLKAWGLEGEIIATAKGEALEGLRFRHPLAAAAQGYDRTSPIYLGDYVTLDTGTGVVHSAPAYGIEDFVSCKAHGLADSDILGPVMGDGKFVDSLPLFGGLSIWDANPRIVEALKLAGSLMLVQKLSHSYMHCWRHKTPVIYRATSQWFAGMDVKPRDGGPSLRESALAGIDATAFYPAWGRARLHAMIANRPDWTLSRQRQWGVPMAFFVHKETGELHPRTVELLEQVAQRVEKGGIEAWQSLDPRELLGDEAELYEKNRDTLDVWFDSGSTHATVLGGKDGVLGGSHGAELAWPADLYLEGSDQHRGWFHSSLLTGCMLYGHPPYKGLLTHGFVVDGQGRKMSKSVGNVIAPQKVSDSLGAEILRLWVASTDYSGELSISDEILKRVVESYRRIRNTLRFLLANVADFDAVGQAVPYGELFEIDRYALAMTAQMQAEVQGHYERYDFHPAVSRLQTFCSEDLGAFYLDILKDRLYTTAAGSAARRSAQTALLDITQTLLKLMAPILSFTAEEAWKVLAGSALAKQADAPRVTIFTEVYHALPPFADGEALTAKWTRLRAIRAEVQRKLEEVRSAGAIGSSLQAEVDLYANAADHDILASLGDDLRFVLIVSRATVHADADDLRIEIAASGHKKCERCWHWRPDVGQDADHPEICGRCVSNLFGAGEPRTRA.

The 'HIGH' region signature appears at 57 to 67 (PYANGDIHIGH). Glu-582 lines the L-isoleucyl-5'-AMP pocket. The 'KMSKS' region motif lies at 623 to 627 (KMSKS). Lys-626 serves as a coordination point for ATP. 4 residues coordinate Zn(2+): Cys-916, Cys-919, Cys-936, and Cys-939.

This sequence belongs to the class-I aminoacyl-tRNA synthetase family. IleS type 1 subfamily. In terms of assembly, monomer. It depends on Zn(2+) as a cofactor.

It localises to the cytoplasm. It catalyses the reaction tRNA(Ile) + L-isoleucine + ATP = L-isoleucyl-tRNA(Ile) + AMP + diphosphate. Its function is as follows. Catalyzes the attachment of isoleucine to tRNA(Ile). As IleRS can inadvertently accommodate and process structurally similar amino acids such as valine, to avoid such errors it has two additional distinct tRNA(Ile)-dependent editing activities. One activity is designated as 'pretransfer' editing and involves the hydrolysis of activated Val-AMP. The other activity is designated 'posttransfer' editing and involves deacylation of mischarged Val-tRNA(Ile). This Bordetella bronchiseptica (strain ATCC BAA-588 / NCTC 13252 / RB50) (Alcaligenes bronchisepticus) protein is Isoleucine--tRNA ligase.